The sequence spans 346 residues: Serine/threonine-protein phosphatase PP1(5.9) (346 aa).

Mn(2+) is bound by residues Asp102, His104, Asp130, and Asn162. His163 serves as the catalytic Proton donor. The Mn(2+) site is built by His211 and His287.

It belongs to the PPP phosphatase family. PP-1 subfamily. Mn(2+) is required as a cofactor.

It carries out the reaction O-phospho-L-seryl-[protein] + H2O = L-seryl-[protein] + phosphate. It catalyses the reaction O-phospho-L-threonyl-[protein] + H2O = L-threonyl-[protein] + phosphate. The sequence is that of Serine/threonine-protein phosphatase PP1(5.9) from Trypanosoma brucei brucei.